A 90-amino-acid polypeptide reads, in one-letter code: Probable Fe(2+)-trafficking protein (90 aa).

Belongs to the Fe(2+)-trafficking protein family. Monomer.

Functionally, could be a mediator in iron transactions between iron acquisition and iron-requiring processes, such as synthesis and/or repair of Fe-S clusters in biosynthetic enzymes. The sequence is that of Probable Fe(2+)-trafficking protein from Yersinia pseudotuberculosis serotype O:1b (strain IP 31758).